A 104-amino-acid chain; its full sequence is Flagellar hook-basal body complex protein FliE (104 aa).

This sequence belongs to the FliE family.

Its subcellular location is the bacterial flagellum basal body. This Enterobacter sp. (strain 638) protein is Flagellar hook-basal body complex protein FliE.